The following is a 316-amino-acid chain: Ferrochelatase (316 aa).

Fe cation is bound by residues H190 and E271.

The protein belongs to the ferrochelatase family.

The protein localises to the cytoplasm. The enzyme catalyses heme b + 2 H(+) = protoporphyrin IX + Fe(2+). Its pathway is porphyrin-containing compound metabolism; protoheme biosynthesis; protoheme from protoporphyrin-IX: step 1/1. In terms of biological role, catalyzes the ferrous insertion into protoporphyrin IX. This Sulfurimonas denitrificans (strain ATCC 33889 / DSM 1251) (Thiomicrospira denitrificans (strain ATCC 33889 / DSM 1251)) protein is Ferrochelatase.